Here is a 98-residue protein sequence, read N- to C-terminus: RING finger protein Z (98 aa).

Over residues 1 to 10 (MGNTKTKDRQ) the composition is skewed to basic and acidic residues. The interval 1–26 (MGNTKTKDRQYQSNSSQPTNTSAPVL) is disordered. A lipid anchor (N-myristoyl glycine; by host) is attached at G2. The span at 11–23 (YQSNSSQPTNTSA) shows a compositional bias: polar residues. The RING-type; atypical zinc-finger motif lies at 41 to 77 (CRCCWFADTNLVNCSNHYLCLKCLNTMLRRSNLCDIC). The PTAP/PSAP motif motif lies at 91-94 (PSAP).

This sequence belongs to the arenaviridae Z protein family. In terms of assembly, interacts with protein NP; this interaction probably directs the encapsidated genome to budding sites. Interacts (via RING domain) with polymerase L; this interaction inhibits viral transcription and replication, Z partially blocks the product exit tunnel for the releasing nascent RNA product. Interacts with the glycoprotein complex; this interaction plays a role in virion budding. Interacts with host eIF4E; this interaction results in eIF4E reduced affinity for its substrate, the 5'-m7 G cap structure. Interacts (via late-budding domain) with host TSG101; this interaction is essential for budding and release of viral particles. Interacts with host RPLP0; this interaction may serve to load ribosome-like particles inside the virion. Interacts with host PML; this interaction induces PML bodies redistribution in the cytoplasm upon viral infection. In terms of processing, myristoylation is required for the role of RING finger protein Z in assembly and budding.

The protein localises to the virion. The protein resides in the host cytoplasm. It localises to the host perinuclear region. It is found in the host cell membrane. Functionally, plays a crucial role in virion assembly and budding. Expressed late in the virus life cycle, it acts as an inhibitor of viral transcription and RNA synthesis by interacting with the viral polymerase L. Presumably recruits the NP encapsidated genome to cellular membranes at budding sites via direct interaction with NP. Plays critical roles in the final steps of viral release by interacting with host TSG101, a member of the vacuolar protein-sorting pathway and using other cellular host proteins involved in vesicle formation pathway. The budding of the virus progeny occurs after association of protein Z with the viral glycoprotein complex SSP-GP1-GP2 at the cell periphery, step that requires myristoylation of protein Z. Also selectively represses protein production by associating with host eIF4E. In cell-based minigenome assay, has an inhibitory effect on the ribonucleoprotein machinery (vRNP), which is responsible for the replication and transcription of the viral genome. This chain is RING finger protein Z, found in Chapare mammarenavirus (isolate Human/Bolivia/810419/2003).